A 211-amino-acid chain; its full sequence is MAKVKICGLKDPDMVAFAAREGADWVGFVFAPSVRQVTLAAAETLLLSVGKATPVALMVDPSDAEAQAVAALGFPILQLHGQETPARAAELKSLTGCAIWKAIGVQTRDNLGQIGTFPDIDGLLLDAKPPEGATIAGGHGAAFDWSILKGWTAPKPWLLAGGLTPENVAEAIAATGAPGVDVSSGVERIRGLKDRELVRAFIRAAKASEQP.

It belongs to the TrpF family.

It carries out the reaction N-(5-phospho-beta-D-ribosyl)anthranilate = 1-(2-carboxyphenylamino)-1-deoxy-D-ribulose 5-phosphate. The protein operates within amino-acid biosynthesis; L-tryptophan biosynthesis; L-tryptophan from chorismate: step 3/5. The protein is N-(5'-phosphoribosyl)anthranilate isomerase of Hyphomonas neptunium (strain ATCC 15444).